The sequence spans 159 residues: SsrA-binding protein (159 aa).

The segment at 134-159 is disordered; sequence KLHDKRETSKERDWNRQKNRLLKERG. A compositionally biased stretch (basic and acidic residues) spans 137-159; sequence DKRETSKERDWNRQKNRLLKERG.

It belongs to the SmpB family.

The protein localises to the cytoplasm. Its function is as follows. Required for rescue of stalled ribosomes mediated by trans-translation. Binds to transfer-messenger RNA (tmRNA), required for stable association of tmRNA with ribosomes. tmRNA and SmpB together mimic tRNA shape, replacing the anticodon stem-loop with SmpB. tmRNA is encoded by the ssrA gene; the 2 termini fold to resemble tRNA(Ala) and it encodes a 'tag peptide', a short internal open reading frame. During trans-translation Ala-aminoacylated tmRNA acts like a tRNA, entering the A-site of stalled ribosomes, displacing the stalled mRNA. The ribosome then switches to translate the ORF on the tmRNA; the nascent peptide is terminated with the 'tag peptide' encoded by the tmRNA and targeted for degradation. The ribosome is freed to recommence translation, which seems to be the essential function of trans-translation. In Rhizobium meliloti (strain 1021) (Ensifer meliloti), this protein is SsrA-binding protein.